A 128-amino-acid chain; its full sequence is Small ribosomal subunit protein bS6 (128 aa).

Residues 100 to 128 (SPMAKAKEERFTRRDDERREEATEAASEE) are disordered. Residues 104–121 (KAKEERFTRRDDERREEA) show a composition bias toward basic and acidic residues.

The protein belongs to the bacterial ribosomal protein bS6 family.

In terms of biological role, binds together with bS18 to 16S ribosomal RNA. In Aeromonas hydrophila subsp. hydrophila (strain ATCC 7966 / DSM 30187 / BCRC 13018 / CCUG 14551 / JCM 1027 / KCTC 2358 / NCIMB 9240 / NCTC 8049), this protein is Small ribosomal subunit protein bS6.